Here is a 493-residue protein sequence, read N- to C-terminus: Non-cyanogenic beta-glucosidase (493 aa).

An N-terminal signal peptide occupies residues 1–18 (MDFIVAIFALFVISSFTI). The N-linked (GlcNAc...) asparagine glycan is linked to asparagine 34. Residues glutamine 54, histidine 158, and 203–204 (NE) each bind a beta-D-glucoside. Residue glutamate 204 is the Proton donor of the active site. Asparagine 335 carries an N-linked (GlcNAc...) asparagine glycan. Tyrosine 346 provides a ligand contact to a beta-D-glucoside. Asparagine 371 and asparagine 412 each carry an N-linked (GlcNAc...) asparagine glycan. A beta-D-glucoside contacts are provided by residues glutamate 422, tryptophan 471, 478-479 (EW), and phenylalanine 487. The active-site Nucleophile is the glutamate 422.

This sequence belongs to the glycosyl hydrolase 1 family. As to expression, leaves.

It catalyses the reaction Hydrolysis of terminal, non-reducing beta-D-glucosyl residues with release of beta-D-glucose.. The polypeptide is Non-cyanogenic beta-glucosidase (Trifolium repens (Creeping white clover)).